The chain runs to 356 residues: Methylthioribose-1-phosphate isomerase (356 aa).

Residue Asp-234 is the Proton donor of the active site.

It belongs to the eIF-2B alpha/beta/delta subunits family. MtnA subfamily.

Its subcellular location is the cytoplasm. The protein resides in the nucleus. The catalysed reaction is 5-(methylsulfanyl)-alpha-D-ribose 1-phosphate = 5-(methylsulfanyl)-D-ribulose 1-phosphate. The protein operates within amino-acid biosynthesis; L-methionine biosynthesis via salvage pathway; L-methionine from S-methyl-5-thio-alpha-D-ribose 1-phosphate: step 1/6. Catalyzes the interconversion of methylthioribose-1-phosphate (MTR-1-P) into methylthioribulose-1-phosphate (MTRu-1-P). The protein is Methylthioribose-1-phosphate isomerase (mri1) of Schizosaccharomyces japonicus (strain yFS275 / FY16936) (Fission yeast).